The sequence spans 282 residues: tRNA (guanine-N(7)-)-methyltransferase (282 aa).

The interval 1 to 31 (MSLTDDQASKRQAYRAAKEANRKELKHVKID) is disordered. The span at 16–31 (AAKEANRKELKHVKID) shows a compositional bias: basic and acidic residues. S-adenosyl-L-methionine-binding positions include Gly99, 122–123 (EI), 157–158 (NA), and Cys177. Asp180 is an active-site residue. Position 255 to 257 (255 to 257 (TEE)) interacts with S-adenosyl-L-methionine.

Belongs to the class I-like SAM-binding methyltransferase superfamily. TrmB family. Forms a complex with TRM82.

It localises to the nucleus. The catalysed reaction is guanosine(46) in tRNA + S-adenosyl-L-methionine = N(7)-methylguanosine(46) in tRNA + S-adenosyl-L-homocysteine. It functions in the pathway tRNA modification; N(7)-methylguanine-tRNA biosynthesis. Functionally, catalyzes the formation of N(7)-methylguanine at position 46 (m7G46) in tRNA. This chain is tRNA (guanine-N(7)-)-methyltransferase, found in Eremothecium gossypii (strain ATCC 10895 / CBS 109.51 / FGSC 9923 / NRRL Y-1056) (Yeast).